A 144-amino-acid chain; its full sequence is Large ribosomal subunit protein uL15 (144 aa).

The interval 1-58 is disordered; the sequence is MHLNTLSPAPGSHKARKRCGRGIGSGIGKTGGRGHKGQKSRSGGSVRPGFEGGQMPLK. Over residues 21-31 the composition is skewed to gly residues; it reads RGIGSGIGKTG.

The protein belongs to the universal ribosomal protein uL15 family. As to quaternary structure, part of the 50S ribosomal subunit.

Its function is as follows. Binds to the 23S rRNA. The polypeptide is Large ribosomal subunit protein uL15 (Colwellia psychrerythraea (strain 34H / ATCC BAA-681) (Vibrio psychroerythus)).